The sequence spans 120 residues: Putative non-specific lipid-transfer protein 14 (120 aa).

Residues 1–22 (MTRSFSPVVSLFLLLLQTICSA) form the signal peptide. Cystine bridges form between Cys30/Cys80, Cys40/Cys57, Cys58/Cys102, and Cys78/Cys116.

Belongs to the plant LTP family.

Plant non-specific lipid-transfer proteins transfer phospholipids as well as galactolipids across membranes. May play a role in wax or cutin deposition in the cell walls of expanding epidermal cells and certain secretory tissues. This is Putative non-specific lipid-transfer protein 14 (LTP14) from Arabidopsis thaliana (Mouse-ear cress).